Consider the following 268-residue polypeptide: MQNPTTTPGSLLTAMRANPPLVQCITNFVAMNIAANVMLAAGASPAMVHAEEEAGEFAAISGALTINIGTLSTGWLAGMTSAAQAANKAGKPWVLDPVAHYATSFRRRSVAQLLELQPTIIRGNASEIIALAGGTSRGQGVDSRDPVELAEEAAVQLAQKHRTIVAVTGATDFVTDGNKASRIEGGSPLMPQVTALGCSLTCLVGAFAATRPDHPLDATVAALAAFAVAGERAGRQVDGPGSFSWRFLDALAALDEKAIDSEARVISL.

A substrate-binding site is contributed by Met-47. ATP-binding residues include Arg-122 and Thr-168. Position 195 (Ala-195) interacts with substrate.

Belongs to the Thz kinase family. It depends on Mg(2+) as a cofactor.

The catalysed reaction is 5-(2-hydroxyethyl)-4-methylthiazole + ATP = 4-methyl-5-(2-phosphooxyethyl)-thiazole + ADP + H(+). The protein operates within cofactor biosynthesis; thiamine diphosphate biosynthesis; 4-methyl-5-(2-phosphoethyl)-thiazole from 5-(2-hydroxyethyl)-4-methylthiazole: step 1/1. Its function is as follows. Catalyzes the phosphorylation of the hydroxyl group of 4-methyl-5-beta-hydroxyethylthiazole (THZ). The chain is Hydroxyethylthiazole kinase from Rhizobium rhizogenes (strain K84 / ATCC BAA-868) (Agrobacterium radiobacter).